We begin with the raw amino-acid sequence, 85 residues long: Progonadoliberin-2 (85 aa).

A signal peptide spans methionine 1 to glycine 23. Glutamine 24 carries the post-translational modification Pyrrolidone carboxylic acid. At glycine 33 the chain carries Glycine amide.

It belongs to the GnRH family. As to expression, midbrain tegmentum.

The protein resides in the secreted. Its function is as follows. Stimulates the secretion of gonadotropins. The protein is Progonadoliberin-2 (gnrh2) of Verasper moseri (Barfin flounder).